A 467-amino-acid polypeptide reads, in one-letter code: UDP-glycosyltransferase 90A2 (467 aa).

Residues S289, 341-343 (VDQ), 358-366 (HCGWNSLTE), and 380-383 (AAEQ) each bind UDP-alpha-D-glucose.

The protein belongs to the UDP-glycosyltransferase family.

The protein is UDP-glycosyltransferase 90A2 (UGT90A2) of Arabidopsis thaliana (Mouse-ear cress).